A 663-amino-acid polypeptide reads, in one-letter code: Rap1 GTPase-activating protein 1 (663 aa).

The GoLoco domain occupies 1-17 (MIEKMQGSRMDEQRCSF). The segment at 1–23 (MIEKMQGSRMDEQRCSFPPPLKT) is disordered. Phe17 bears the Phosphoserine mark. The Rap-GAP domain maps to 181–397 (IVTFDEHVIS…RTRAALLETL (217 aa)). Ser441 is subject to Phosphoserine. Disordered regions lie at residues 442-604 (MDAM…PHKR) and 616-645 (SVST…PACP). The segment covering 450 to 465 (KKPNTVSTSHSGSFAP) has biased composition (polar residues). Residues Ser484, Ser499, Ser515, Ser541, and Ser542 each carry the phosphoserine modification. The segment covering 535 to 549 (ENSSTQSSPEMPTTK) has biased composition (polar residues). Residues 567–579 (RSSSSASSFASVV) show a composition bias toward low complexity. The segment covering 580–591 (EETEGVDGEDTG) has biased composition (acidic residues). The segment covering 616 to 630 (SVSTTSGGSSPGPSR) has biased composition (low complexity).

In terms of assembly, homodimer and heterodimer with RAP1B. In terms of tissue distribution, significant expression seen in the brain, kidney and pancreas. Abundant in the cerebral cortex and expressed at much lower levels in the spinal cord. Not detected in the lymphoid tissues.

The protein localises to the golgi apparatus membrane. GTPase activator for the nuclear Ras-related regulatory protein RAP-1A (KREV-1), converting it to the putatively inactive GDP-bound state. The chain is Rap1 GTPase-activating protein 1 (RAP1GAP) from Homo sapiens (Human).